A 206-amino-acid polypeptide reads, in one-letter code: Photosynthetic reaction center cytochrome c-551 (206 aa).

Helical transmembrane passes span 10–30, 49–69, and 76–96; these read IALA…VSFL, FMGW…LGKM, and KWFL…FFSL. C152, C155, H156, and M182 together coordinate heme.

Component of the photosynthetic reaction center. The reaction center interacts with the Fenna-Matthews-Olson (FMO, fmoA) complex. Post-translationally, binds 1 heme group per subunit.

The protein localises to the cell inner membrane. Its function is as follows. Monoheme cytochrome which is the immediate electron donor to P840 of the photosynthetic reaction center complex. The sequence is that of Photosynthetic reaction center cytochrome c-551 (pscC) from Chlorobaculum parvum (strain DSM 263 / NCIMB 8327) (Chlorobium vibrioforme subsp. thiosulfatophilum).